Reading from the N-terminus, the 240-residue chain is CD302 antigen (240 aa).

Residues 40–160 enclose the C-type lectin domain; the sequence is FQDSCYIFLQ…CEVSSVEGTL (121 aa). Residue Asn117 is glycosylated (N-linked (GlcNAc...) asparagine). Cys136 and Cys151 are joined by a disulfide. A helical membrane pass occupies residues 177–197; sequence ILISALVIASTVILTVLGAVI. Residues 198-240 lie on the Cytoplasmic side of the membrane; it reads WFLYKRNLDSGFTTVFSTAPQSPFNDDCVLVVAEENEYAVQFD.

The protein resides in the membrane. It localises to the cell projection. Its subcellular location is the filopodium. It is found in the cytoplasm. The protein localises to the cell cortex. Its function is as follows. Potential multifunctional C-type lectin receptor that may play roles in endocytosis and phagocytosis as well as in cell adhesion and migration. The chain is CD302 antigen from Sus scrofa (Pig).